Consider the following 138-residue polypeptide: Microneme antigen L2 (138 aa).

2 consecutive PAN domains span residues 9–78 (CFAH…PRSC) and 82–138 (CSDA…SKRA). Disulfide bonds link C9-C78, C34-C56, C38-C44, C82-C86, C107-C127, and C111-C117. Residue S18 participates in a carbohydrate binding. A carbohydrate-binding residues include K59, Y66, and D71.

Homodimer or heterodimer. In terms of processing, contains six disulfide bonds.

The protein localises to the cytoplasmic vesicle. It is found in the secretory vesicle. Its subcellular location is the microneme. Functionally, galactose-binding lectin. Plays a role in adhesion to the host cell. Has a potential role in invasion of host cells. The sequence is that of Microneme antigen L2 from Sarcocystis muris.